Reading from the N-terminus, the 447-residue chain is Methylenetetrahydrofolate--tRNA-(uracil-5-)-methyltransferase TrmFO (447 aa).

FAD is bound at residue 8–13 (GGGLAG). Positions 398–421 (NWGLVPAPPKRENGRRLGRQERRR) are disordered. Positions 406–417 (PKRENGRRLGRQ) are enriched in basic and acidic residues.

The protein belongs to the MnmG family. TrmFO subfamily. Requires FAD as cofactor.

It localises to the cytoplasm. It carries out the reaction uridine(54) in tRNA + (6R)-5,10-methylene-5,6,7,8-tetrahydrofolate + NADH + H(+) = 5-methyluridine(54) in tRNA + (6S)-5,6,7,8-tetrahydrofolate + NAD(+). It catalyses the reaction uridine(54) in tRNA + (6R)-5,10-methylene-5,6,7,8-tetrahydrofolate + NADPH + H(+) = 5-methyluridine(54) in tRNA + (6S)-5,6,7,8-tetrahydrofolate + NADP(+). Functionally, catalyzes the folate-dependent formation of 5-methyl-uridine at position 54 (M-5-U54) in all tRNAs. The protein is Methylenetetrahydrofolate--tRNA-(uracil-5-)-methyltransferase TrmFO of Rubrobacter xylanophilus (strain DSM 9941 / JCM 11954 / NBRC 16129 / PRD-1).